Here is a 442-residue protein sequence, read N- to C-terminus: 3-phosphoshikimate 1-carboxyvinyltransferase (442 aa).

Residues Lys-25, Ser-26, and Arg-30 each contribute to the 3-phosphoshikimate site. Lys-25 is a phosphoenolpyruvate binding site. 2 residues coordinate phosphoenolpyruvate: Gly-96 and Arg-124. 6 residues coordinate 3-phosphoshikimate: Ser-171, Ser-172, Gln-173, Ser-203, Asp-325, and Lys-352. A phosphoenolpyruvate-binding site is contributed by Gln-173. Catalysis depends on Asp-325, which acts as the Proton acceptor. The phosphoenolpyruvate site is built by Arg-356, Arg-400, and Lys-425.

The protein belongs to the EPSP synthase family. In terms of assembly, monomer.

It is found in the cytoplasm. The catalysed reaction is 3-phosphoshikimate + phosphoenolpyruvate = 5-O-(1-carboxyvinyl)-3-phosphoshikimate + phosphate. It functions in the pathway metabolic intermediate biosynthesis; chorismate biosynthesis; chorismate from D-erythrose 4-phosphate and phosphoenolpyruvate: step 6/7. Catalyzes the transfer of the enolpyruvyl moiety of phosphoenolpyruvate (PEP) to the 5-hydroxyl of shikimate-3-phosphate (S3P) to produce enolpyruvyl shikimate-3-phosphate and inorganic phosphate. This Bordetella pertussis (strain Tohama I / ATCC BAA-589 / NCTC 13251) protein is 3-phosphoshikimate 1-carboxyvinyltransferase.